A 216-amino-acid polypeptide reads, in one-letter code: Ras-related protein Rab-5C (216 aa).

GTP is bound by residues S30, A31, G33, K34, S35, S36, H47, E48, T53, and G79. Position 35 (S35) interacts with Mg(2+). 2 consecutive short sequence motifs (switch) follow at residues Q45–A57 and A78–A94. T53 is a Mg(2+) binding site. Residue S85 is modified to Phosphoserine. Residues N134, K135, D137, A165, and K166 each contribute to the GTP site. A disordered region spans residues N185–N216. Positions Q203–N216 are enriched in polar residues. 2 S-geranylgeranyl cysteine lipidation sites follow: C213 and C214.

It belongs to the small GTPase superfamily. Rab family. Interacts with EEA1 and INCA1. Interacts with GDI1, GDI2, CHML and CHM; phosphorylation at Ser-85 disrupts this interaction. The cofactor is Mg(2+). In terms of processing, phosphorylation of Ser-85 in the switch II region by LRRK2 prevents the association of RAB regulatory proteins, including CHM, CHML and RAB GDP dissociation inhibitors GDI1 and GDI2.

Its subcellular location is the cell membrane. The protein localises to the early endosome membrane. The protein resides in the melanosome. It carries out the reaction GTP + H2O = GDP + phosphate + H(+). Its activity is regulated as follows. Regulated by guanine nucleotide exchange factors (GEFs) which promote the exchange of bound GDP for free GTP. Regulated by GTPase activating proteins (GAPs) which increase the GTP hydrolysis activity. Inhibited by GDP dissociation inhibitors (GDIs). Functionally, the small GTPases Rab are key regulators of intracellular membrane trafficking, from the formation of transport vesicles to their fusion with membranes. Rabs cycle between an inactive GDP-bound form and an active GTP-bound form that is able to recruit to membranes different sets of downstream effectors directly responsible for vesicle formation, movement, tethering and fusion. This is Ras-related protein Rab-5C from Mus musculus (Mouse).